The following is a 311-amino-acid chain: Probable manganese-dependent inorganic pyrophosphatase (311 aa).

Histidine 9, aspartate 13, aspartate 15, aspartate 77, histidine 99, and aspartate 151 together coordinate Mn(2+).

This sequence belongs to the PPase class C family. It depends on Mn(2+) as a cofactor.

The protein localises to the cytoplasm. It catalyses the reaction diphosphate + H2O = 2 phosphate + H(+). The chain is Probable manganese-dependent inorganic pyrophosphatase from Streptococcus pneumoniae (strain JJA).